The following is a 512-amino-acid chain: N-fatty-acyl-amino acid synthase/hydrolase PM20D1 (512 aa).

Residues 1-34 (MAVSRWKAVGSTLLAAFLVGLVVLIAVLLIRTYT) form the signal peptide. 2 N-linked (GlcNAc...) asparagine glycosylation sites follow: asparagine 45 and asparagine 81. Histidine 134 provides a ligand contact to Zn(2+). Aspartate 136 is an active-site residue. Aspartate 166 provides a ligand contact to Zn(2+). The active-site Proton acceptor is glutamate 200. Zn(2+)-binding residues include glutamate 201 and aspartate 227. An N-linked (GlcNAc...) asparagine glycan is attached at asparagine 450. Residue histidine 472 participates in Zn(2+) binding.

The protein belongs to the peptidase M20A family.

It is found in the secreted. The catalysed reaction is an N-acyl-L-amino acid + H2O = an L-alpha-amino acid + a carboxylate. The enzyme catalyses an N-acyl-aromatic L-alpha-amino acid + H2O = an aromatic L-alpha-amino acid + a carboxylate. It catalyses the reaction N-(5Z,8Z,11Z,14Z)-eicosatetraenoyl-glycine + H2O = (5Z,8Z,11Z,14Z)-eicosatetraenoate + glycine. It carries out the reaction N-hexadecanoyl-L-phenylalanine + H2O = hexadecanoate + L-phenylalanine. The catalysed reaction is N-octadecanoyl-L-phenylalanine + H2O = octadecanoate + L-phenylalanine. The enzyme catalyses N-(4Z,7Z,10Z,13Z,16Z,19Z-docosahexaenoyl)-L-phenylalanine + H2O = (4Z,7Z,10Z,13Z,16Z,19Z)-docosahexaenoate + L-phenylalanine. It catalyses the reaction N-(9Z-octadecenoyl)-L-asparagine + H2O = L-asparagine + (9Z)-octadecenoate. It carries out the reaction (9Z)-octadecenoate + glycine = N-(9Z-octadecenoyl)glycine + H2O. The catalysed reaction is N-(9Z-octadecenoyl)-L-lysine + H2O = L-lysine + (9Z)-octadecenoate. The enzyme catalyses N-(9Z-octadecenoyl)-L-methionine + H2O = (9Z)-octadecenoate + L-methionine. It catalyses the reaction N-(9Z-octadecenoyl)-L-serine + H2O = L-serine + (9Z)-octadecenoate. It carries out the reaction N-(9Z-octadecenoyl)-L-tryptophan + H2O = L-tryptophan + (9Z)-octadecenoate. The catalysed reaction is N-(9Z-octadecenoyl)-L-tyrosine + H2O = L-tyrosine + (9Z)-octadecenoate. The enzyme catalyses N-(9Z-octadecenoyl)-L-glutamine + H2O = L-glutamine + (9Z)-octadecenoate. It catalyses the reaction N-(5Z,8Z,11Z,14Z-eicosatetraenoyl)-L-serine + H2O = (5Z,8Z,11Z,14Z)-eicosatetraenoate + L-serine. It carries out the reaction (5Z,8Z,11Z,14Z)-eicosatetraenoate + L-phenylalanine = N-(5Z,8Z,11Z,14Z-eicosatetraenoyl)-L-phenylalanine + H2O. The catalysed reaction is N-(9Z-octadecenoyl)-L-leucine + H2O = L-leucine + (9Z)-octadecenoate. The enzyme catalyses L-phenylalanine + (9Z)-octadecenoate = N-(9Z-octadecenoyl)-L-phenylalanine + H2O. It functions in the pathway amino-acid metabolism. It participates in energy metabolism; electron transfer. Its pathway is lipid metabolism; fatty acid metabolism. Its activity is regulated as follows. Lipoproteins are powerful coactivators of PM20D1 activity in vitro and NAA biosynthesis in vivo. In terms of biological role, secreted enzyme that regulates the endogenous N-fatty acyl amino acid (NAAs) tissue and circulating levels by functioning as a bidirectional NAA synthase/hydrolase. It condenses free fatty acids and free amino acids to generate NAAs and bidirectionally catalyzes the reverse hydrolysis reaction. Some of these NAAs stimulate oxidative metabolism via mitochondrial uncoupling, increasing energy expenditure in a UPC1-independent manner. Thereby, this secreted protein may indirectly regulate whole body energy expenditure. PM20D1 circulates in tight association with both low- and high-density (LDL and HDL,respectively) lipoprotein particles. The protein is N-fatty-acyl-amino acid synthase/hydrolase PM20D1 of Xenopus tropicalis (Western clawed frog).